We begin with the raw amino-acid sequence, 396 residues long: Elongation factor Tu (396 aa).

The tr-type G domain maps to K10–E206. The interval G19–T26 is G1. Residue G19 to T26 coordinates GTP. Residue T26 participates in Mg(2+) binding. The G2 stretch occupies residues G60–S64. Residues D81–G84 are G3. Residues D81–H85 and N136–D139 contribute to the GTP site. A G4 region spans residues N136–D139. Residues S174 to L176 are G5.

This sequence belongs to the TRAFAC class translation factor GTPase superfamily. Classic translation factor GTPase family. EF-Tu/EF-1A subfamily. Monomer.

The protein localises to the cytoplasm. The catalysed reaction is GTP + H2O = GDP + phosphate + H(+). In terms of biological role, GTP hydrolase that promotes the GTP-dependent binding of aminoacyl-tRNA to the A-site of ribosomes during protein biosynthesis. The chain is Elongation factor Tu from Xylella fastidiosa (strain 9a5c).